We begin with the raw amino-acid sequence, 291 residues long: Beta-lactamase CTX-M-8 (291 aa).

Residues 1–30 form the signal peptide; it reads MMRHRVKRMMLMTTACISLLLGSAPLYAQA. The active-site Nucleophile; acyl-ester intermediate is Ser-73. Residues Lys-76, Ser-133, Glu-169, and Ser-240 each contribute to the a beta-lactam site.

This sequence belongs to the class-A beta-lactamase family. Monomer.

It is found in the secreted. It catalyses the reaction a beta-lactam + H2O = a substituted beta-amino acid. Inhibited by the beta-lactamase-blocking agents clavulanic acid, tazobactam and sulbactam; in the DH5alpha strain of E.coli. Functionally, extended-spectrum beta-lactamase (ESBL) which confers resistance to penicillins, as well as first, third and fourth-generation cephalosporins. Has cefotaxime-hydrolyzing activity. Inactive against cephalosporin antibiotic, cefoxitin, and the carbapenem, imipenem. The polypeptide is Beta-lactamase CTX-M-8 (Citrobacter amalonaticus).